A 144-amino-acid chain; its full sequence is MTTQASTFAVAVPSVATPFRRHRNPFVVRAQAEPSDKSVEIMRKFSEQYARKSGTYFCVDKGVTSVVIKGLADHKDTLGAPLCPCRHYDDKAAEVAQGFWNCPCVPMRERKECHCMLFLTPDNDFAGNEQTITLDEIKESTANM.

The N-terminal 31 residues, 1-31 (MTTQASTFAVAVPSVATPFRRHRNPFVVRAQ), are a transit peptide targeting the chloroplast. A [4Fe-4S] cluster-binding site is contributed by Cys83. Residue Cys85 is the Nucleophile of the active site. Cys85 and Cys115 are disulfide-bonded. The [4Fe-4S] cluster site is built by Cys102, Cys104, and Cys113.

Belongs to the ferredoxin thioredoxin reductase beta subunit family. In terms of assembly, heterodimer of subunit A (variable subunit) and subunit B (catalytic subunit). Heterodimeric FTR forms a complex with ferredoxin and thioredoxin. The cofactor is [4Fe-4S] cluster.

It localises to the plastid. Its subcellular location is the chloroplast. The enzyme catalyses [thioredoxin]-disulfide + 2 reduced [2Fe-2S]-[ferredoxin] + 2 H(+) = [thioredoxin]-dithiol + 2 oxidized [2Fe-2S]-[ferredoxin]. In terms of biological role, catalytic subunit of the ferredoxin-thioredoxin reductase (FTR), which catalyzes the two-electron reduction of thioredoxins by the electrons provided by reduced ferredoxin. The chain is Ferredoxin-thioredoxin reductase catalytic chain, chloroplastic (FTRC) from Glycine max (Soybean).